The chain runs to 223 residues: dITP/XTP pyrophosphatase (223 aa).

9–14 (TTNQNK) contributes to the substrate binding site. D71 serves as the catalytic Proton acceptor. D71 contributes to the Mg(2+) binding site. Residues S72, 152–155 (FGYD), K175, and 180–181 (HR) each bind substrate. The disordered stretch occupies residues 203–223 (LSEEKPAKPDHSEFEGNDWSK).

Belongs to the HAM1 NTPase family. As to quaternary structure, homodimer. The cofactor is Mg(2+).

It catalyses the reaction XTP + H2O = XMP + diphosphate + H(+). It carries out the reaction dITP + H2O = dIMP + diphosphate + H(+). The catalysed reaction is ITP + H2O = IMP + diphosphate + H(+). Its function is as follows. Pyrophosphatase that catalyzes the hydrolysis of nucleoside triphosphates to their monophosphate derivatives, with a high preference for the non-canonical purine nucleotides XTP (xanthosine triphosphate), dITP (deoxyinosine triphosphate) and ITP. Seems to function as a house-cleaning enzyme that removes non-canonical purine nucleotides from the nucleotide pool, thus preventing their incorporation into DNA/RNA and avoiding chromosomal lesions. The polypeptide is dITP/XTP pyrophosphatase (Desulfotalea psychrophila (strain LSv54 / DSM 12343)).